Here is a 568-residue protein sequence, read N- to C-terminus: MKETIQGTGSWGPEPPGPGTTYSNPRRERLRWPLPPKPRLKSGGGFGPDPGSGTTVPTRRLPAPRPSFDASASEEEEEEEEEDEEEVAAWRLPPRWGQLGASQRSRALRPSHRKTCSQRRRRAMRAFQMLLYSKSTSLTFHWKLWGRHRGRRRNLAHPKNHLSPQEGGATPQVPSPCCRFDSPRGLPPPRLGLLGALMAEDGMRGSPPVPSGPPMEEDGLRWTPKSPLDPDSGLLSCTLPNGFGGLSGPEGERSLAPPDASILISNVCSIGDHVAQELFQSSDLGIAEEADRTGEKAGQHSPLREEHVTCVQSILDEFLQTYGSLIPLSTDEVVEKLEDIFQQEFSTPSRKSLVLQLIQSYQRMPGNAMVRGFRVSYKRHVLTMDDLGTLYGQNWLNDQVMNMYGDLVMDTVPEKVHFFNSFFYDKLRTKGYDGVKRWTKNVDIFNKELLLIPIHLEVHWSLISVDVRRRTITYFDSQRTLNRRCPKHIAKYLQAEAVKKDRLDFHQGWKGYFKMNVARQNNDSDCGAFVLQYCKHLALSQPFSFTQQDMPKLRRQIYKELCHCKLTV.

Residues 1 to 119 (MKETIQGTGS…PSHRKTCSQR (119 aa)) form a disordered region. 3 positions are modified to phosphoserine: Ser52, Ser71, and Ser73. Over residues 72–87 (ASEEEEEEEEEDEEEV) the composition is skewed to acidic residues. Residues 106 to 119 (RALRPSHRKTCSQR) are compositionally biased toward basic residues. 2 short sequence motifs (nuclear localization signal) span residues 119–122 (RRRR) and 147–153 (RHRGRRR). The tract at residues 155–174 (LAHPKNHLSPQEGGATPQVP) is disordered. Ser163 carries the phosphoserine modification. At Thr170 the chain carries Phosphothreonine. Ser175, Ser182, Ser206, and Ser226 each carry phosphoserine. The tract at residues 380 to 537 (HVLTMDDLGT…AFVLQYCKHL (158 aa)) is protease. Catalysis depends on residues His459 and Asp476. Cys526 acts as the Nucleophile in catalysis.

It belongs to the peptidase C48 family. As to quaternary structure, component of some MLL1/MLL complex, at least composed of the core components KMT2A/MLL1, ASH2L, HCFC1/HCF1, WDR5 and RBBP5, as well as the facultative components BACC1, CHD8, E2F6, HSP70, INO80C, KANSL1, LAS1L, MAX, MCRS1, MGA, MYST1/MOF, PELP1, PHF20, PRP31, RING2, RUVB1/TIP49A, RUVB2/TIP49B, SENP3, TAF1, TAF4, TAF6, TAF7, TAF9 and TEX10. Interacts with EP300, NPM1 and CDCA8. Component of the 5FMC complex, at least composed of PELP1, LAS1L, TEX10, WDR18 and SENP3; the complex interacts with methylated CHTOP and ZNF148. Interacts with NOL9. Interacts with CCAR2.

The protein resides in the nucleus. It localises to the nucleolus. It is found in the nucleoplasm. The protein localises to the cytoplasm. On oxidative stress, SENP3 degradation is blocked by inhibition of its ubiquitination, which stabilizes it as it accumulates in the nucleoplasm. Protease that releases SUMO2 and SUMO3 monomers from sumoylated substrates, but has only weak activity against SUMO1 conjugates. Deconjugates SUMO2 from MEF2D, which increases its transcriptional activation capability. Deconjugates SUMO2 and SUMO3 from CDCA8. Redox sensor that, when redistributed into nucleoplasm, can act as an effector to enhance HIF1A transcriptional activity by desumoylating EP300. Required for rRNA processing through deconjugation of SUMO2 and SUMO3 from nucleophosmin, NPM1. Plays a role in the regulation of sumoylation status of ZNF148. Functions as a component of the Five Friends of Methylated CHTOP (5FMC) complex; the 5FMC complex is recruited to ZNF148 by methylated CHTOP, leading to desumoylation of ZNF148 and subsequent transactivation of ZNF148 target genes. Deconjugates SUMO2 from KAT5. Catalyzes desumoylation of MRE11. The sequence is that of Sentrin-specific protease 3 (Senp3) from Mus musculus (Mouse).